The chain runs to 286 residues: Pantothenate synthetase (286 aa).

30–37 is an ATP binding site; sequence MGCFHQGH. His-37 acts as the Proton donor in catalysis. Residue Gln-61 participates in (R)-pantoate binding. Gln-61 contributes to the beta-alanine binding site. 147 to 150 serves as a coordination point for ATP; sequence GEKD. Residue Gln-153 participates in (R)-pantoate binding. 184-187 serves as a coordination point for ATP; it reads MSSR.

The protein belongs to the pantothenate synthetase family. As to quaternary structure, homodimer.

The protein localises to the cytoplasm. It catalyses the reaction (R)-pantoate + beta-alanine + ATP = (R)-pantothenate + AMP + diphosphate + H(+). The protein operates within cofactor biosynthesis; (R)-pantothenate biosynthesis; (R)-pantothenate from (R)-pantoate and beta-alanine: step 1/1. Functionally, catalyzes the condensation of pantoate with beta-alanine in an ATP-dependent reaction via a pantoyl-adenylate intermediate. This is Pantothenate synthetase from Desulfotalea psychrophila (strain LSv54 / DSM 12343).